A 31-amino-acid polypeptide reads, in one-letter code: Cytochrome b6-f complex subunit 6 (31 aa).

Residues 4-24 (ITSYFGFLLAALTITSALFIG) traverse the membrane as a helical segment.

This sequence belongs to the PetL family. In terms of assembly, the 4 large subunits of the cytochrome b6-f complex are cytochrome b6, subunit IV (17 kDa polypeptide, PetD), cytochrome f and the Rieske protein, while the 4 small subunits are PetG, PetL, PetM and PetN. The complex functions as a dimer.

The protein resides in the plastid. It localises to the chloroplast thylakoid membrane. Functionally, component of the cytochrome b6-f complex, which mediates electron transfer between photosystem II (PSII) and photosystem I (PSI), cyclic electron flow around PSI, and state transitions. PetL is important for photoautotrophic growth as well as for electron transfer efficiency and stability of the cytochrome b6-f complex. The protein is Cytochrome b6-f complex subunit 6 of Gossypium hirsutum (Upland cotton).